The sequence spans 521 residues: Amidase 1 (521 aa).

Active-site charge relay system residues include Lys-112 and Ser-187. Substrate-binding positions include Ser-187 and 208–211 (IGGS). Ser-211 serves as the catalytic Acyl-ester intermediate.

It belongs to the amidase family.

The enzyme catalyses a monocarboxylic acid amide + H2O = a monocarboxylate + NH4(+). Its pathway is xenobiotic degradation. In terms of biological role, amidase; part of the Fusarium detoxification of benzoxazolinone cluster 1 (FDB1) involved in the degradation of benzoxazolinones produced by the host plant. Maize, wheat, and rye produce the 2 benzoxazinone phytoanticipins 2,4-dihy-droxy-7-methoxy-1,4-benzoxazin-3-one (DIMBOA) and 2,4-dihydroxy-1,4-benzoxazin-3-one (DIBOA) that, due to their inherent instability once released, spontaneously degrade to the more stable corresponding benzoxazolinones, 6-methoxy-2-benzoxazolinone (MBOA) and 2-benzoxazolinone (BOA), respectively. The first step in the detoxification of benzoxazolinones involves the hydrolysis of the cyclic ester bond of benzoxazolinones by the FDB1 cluster gamma-lactamase MBL1 to aminophenols. MBL1 is able to convert BOA into 2-aminophenol (2-AP), as well as MBOA into 5-methoxy-2-aminophenol (2-AMP). The FDB2 cluster N-malonyltransferase FDB2/NAT1 then metabolizes aminophenols via N-malonylation to non-toxic malonamic acids. FDB2/NAT1 converts 2-AP into N-(2-hydroxyphenyl) malonamic acid (HPMA) and 2-AMP into N-(2-hydroxy-4-methoxyphenyl) malonamic acid (HMPMA). The duplicated dienlactone hydrolases DLH1 and DLH2 may provide redundant function for hydrolyzing the lactone moiety in the BOA molecule. The roles of the amidases an other enzymes encoded by the 2 FDB clusters have not been identified so far. In Gibberella moniliformis (strain M3125 / FGSC 7600) (Maize ear and stalk rot fungus), this protein is Amidase 1.